The primary structure comprises 778 residues: Serine/threonine-protein kinase BRSK1 (778 aa).

The span at 1-12 (MSSGSKEGGGGS) shows a compositional bias: gly residues. The segment at 1–29 (MSSGSKEGGGGSPAYHLPHPHPHPPQHAQ) is disordered. A Protein kinase domain is found at 34-285 (YRLEKTLGKG…LEQIQKHPWY (252 aa)). ATP is bound by residues 40–48 (LGKGQTGLV) and lysine 63. Residue aspartate 156 is the Proton acceptor of the active site. Residue threonine 189 is modified to Phosphothreonine; by LKB1. Serine 193 carries the post-translational modification Phosphoserine. In terms of domain architecture, UBA spans 314–356 (ELDPDVLESMASLGCFRDRERLHRELRSEEENQEKMIYYLLLD). Residues 362–383 (PSCEDQDLPPRNDVDPPRKRVD) are compositionally biased toward basic and acidic residues. Residues 362–548 (PSCEDQDLPP…SPGGGVGGAA (187 aa)) are disordered. Phosphoserine is present on residues serine 399, serine 443, serine 447, and serine 450. Low complexity predominate over residues 430 to 457 (SRSVSGASTGLSSSPLSSPRSPVFSFSP). 4 positions are modified to omega-N-methylarginine: arginine 466, arginine 481, arginine 484, and arginine 498. Over residues 491-508 (QPPPPSARSTPLPGPPGS) the composition is skewed to pro residues. Position 508 is a phosphoserine (serine 508). Residues 509–533 (PRSSGGTPLHSPLHTPRASPTGTPG) are compositionally biased toward low complexity. Omega-N-methylarginine is present on arginine 525. Phosphothreonine is present on residues threonine 529 and threonine 535. Omega-N-methylarginine is present on arginine 550. At threonine 583 the chain carries Phosphothreonine. 3 positions are modified to phosphoserine: serine 586, serine 587, and serine 601. The disordered stretch occupies residues 719–778 (QPSVQALADEKNGAQTRPAGTPPRSLQPPPGRPDPDLSSSPRRGPSKDKKLLATNGTPLP).

The protein belongs to the protein kinase superfamily. CAMK Ser/Thr protein kinase family. SNF1 subfamily. Mg(2+) is required as a cofactor. In terms of processing, phosphorylated at Thr-189 by STK11/LKB1 in complex with STE20-related adapter-alpha (STRADA) pseudo kinase and CAB39. Not phosphorylated at Thr-189 by CaMKK2. In contrast, it is phosphorylated and activated by CaMKK1. May be inactivated via dephosphorylation of Thr-189 by PP2C. May be autophosphorylated. As to expression, mainly present in brain. Present in presynaptic nerve terminals (at protein level).

It localises to the cytoplasm. The protein resides in the nucleus. It is found in the cytoskeleton. Its subcellular location is the microtubule organizing center. The protein localises to the centrosome. It localises to the synapse. The protein resides in the presynaptic active zone. It is found in the cytoplasmic vesicle. Its subcellular location is the secretory vesicle. The protein localises to the synaptic vesicle. It carries out the reaction L-seryl-[protein] + ATP = O-phospho-L-seryl-[protein] + ADP + H(+). The catalysed reaction is L-threonyl-[protein] + ATP = O-phospho-L-threonyl-[protein] + ADP + H(+). The enzyme catalyses L-seryl-[tau protein] + ATP = O-phospho-L-seryl-[tau protein] + ADP + H(+). It catalyses the reaction L-threonyl-[tau protein] + ATP = O-phospho-L-threonyl-[tau protein] + ADP + H(+). Its activity is regulated as follows. Activated by phosphorylation on Thr-189 by STK11/LKB1. In terms of biological role, serine/threonine-protein kinase that plays a key role in polarization of neurons and centrosome duplication. Phosphorylates CDC25B, CDC25C, MAPT/TAU, RIMS1, TUBG1, TUBG2 and WEE1. Following phosphorylation and activation by STK11/LKB1, acts as a key regulator of polarization of cortical neurons, probably by mediating phosphorylation of microtubule-associated proteins such as MAPT/TAU at 'Thr-523' and 'Ser-573'. Also regulates neuron polarization by mediating phosphorylation of WEE1 at 'Ser-642' in postmitotic neurons, leading to down-regulate WEE1 activity in polarized neurons. Also acts as a positive regulator of centrosome duplication by mediating phosphorylation of gamma-tubulin (TUBG1 and TUBG2) at 'Ser-131', leading to translocation of gamma-tubulin and its associated proteins to the centrosome. Involved in the UV-induced DNA damage checkpoint response, probably by inhibiting CDK1 activity through phosphorylation and activation of WEE1, and inhibition of CDC25B and CDC25C. In neurons, localizes to synaptic vesicles and plays a role in neurotransmitter release, possibly by phosphorylating RIMS1. The protein is Serine/threonine-protein kinase BRSK1 (Brsk1) of Rattus norvegicus (Rat).